We begin with the raw amino-acid sequence, 537 residues long: MNQGTKSILLAATLAAIPWQVYGSIEQSSLLPIPPMGFNNWARFMCDLNETLFTETADAMAANGLRDAGYNRINLDDCWMAYQRSDNGSLQWNTTKFPHGLPWLAQYVKAKGFHFGIYEDSGNMTCGGYPGSYNHEEQDANTFALWGIDYLKLDGCNVYATQGRTLEEEYKQRYGHWHQVLSKMQHPLIFSESAPAYFAGTDNNTDWYTVMDWVPIYGELARHSTDILVYSGAGSAWDSIMNNYNYNTLLARYQRPGYFNDPDFLIPDHPGLTADEKRSHFALWASFSAPLIISAYIPALSKDEIAFLTNEALIAVNQDPLAQQATFASRDNTLDILTRNLANGDRLLTVLNKGNTTVTRDIPVQWLGLTETDCTYTAEDLWDGKTQKISDHIKIELASHATAVFRLGLPQGCSSVVPTGLVFNTASGNCLTAASNSSVAFQSCNGETSQIWQVTLSGVIRPVSQTTQCLAADGNSVKLQACDSTDSDGQNWTYAVTGNLKNAKTDGCLTEGSVQMKSCLYERDGQVFGLPSGVQLS.

Residues Met1–Gly23 form the signal peptide. Cys46 and Cys78 are joined by a disulfide. N-linked (GlcNAc...) asparagine glycosylation is found at Asn49, Asn87, Asn93, and Asn123. Cys126 and Cys156 are oxidised to a cystine. Asp154 serves as the catalytic Nucleophile. N-linked (GlcNAc...) asparagine glycosylation is present at Asn203. Residue Asp212 is the Proton donor of the active site. 2 N-linked (GlcNAc...) asparagine glycosylation sites follow: Asn355 and Asn436. In terms of domain architecture, Ricin B-type lectin spans Cys413 to Ser537. 2 disulfides stabilise this stretch: Cys430-Cys444 and Cys469-Cys482. A glycan (N-linked (GlcNAc...) asparagine) is linked at Asn491.

Belongs to the glycosyl hydrolase 27 family.

The protein resides in the secreted. It catalyses the reaction Hydrolysis of terminal, non-reducing alpha-D-galactose residues in alpha-D-galactosides, including galactose oligosaccharides, galactomannans and galactolipids.. In terms of biological role, hydrolyzes a variety of simple alpha-D-galactoside as well as more complex molecules such as oligosaccharides and polysaccharides. In Aspergillus niger (strain ATCC MYA-4892 / CBS 513.88 / FGSC A1513), this protein is Probable alpha-galactosidase A (aglA).